Consider the following 123-residue polypeptide: Small ribosomal subunit protein uS12 (123 aa).

3-methylthioaspartic acid is present on aspartate 89.

Belongs to the universal ribosomal protein uS12 family. Part of the 30S ribosomal subunit. Contacts proteins S8 and S17. May interact with IF1 in the 30S initiation complex.

Its function is as follows. With S4 and S5 plays an important role in translational accuracy. Functionally, interacts with and stabilizes bases of the 16S rRNA that are involved in tRNA selection in the A site and with the mRNA backbone. Located at the interface of the 30S and 50S subunits, it traverses the body of the 30S subunit contacting proteins on the other side and probably holding the rRNA structure together. The combined cluster of proteins S8, S12 and S17 appears to hold together the shoulder and platform of the 30S subunit. The protein is Small ribosomal subunit protein uS12 of Sinorhizobium medicae (strain WSM419) (Ensifer medicae).